Here is a 191-residue protein sequence, read N- to C-terminus: Cytochrome c oxidase assembly protein CtaG (191 aa).

Residues 1–9 lie on the Cytoplasmic side of the membrane; that stretch reads MSLSPHQKT. Residues 10-30 traverse the membrane as a helical; Signal-anchor for type II membrane protein segment; that stretch reads AGGLVLVVAVMGAASFAAVPF. Topologically, residues 31 to 191 are periplasmic; it reads YNWFCRVTGF…LAAESATDVN (161 aa).

This sequence belongs to the COX11/CtaG family.

Its subcellular location is the cell inner membrane. Functionally, exerts its effect at some terminal stage of cytochrome c oxidase synthesis, probably by being involved in the insertion of the copper B into subunit I. This chain is Cytochrome c oxidase assembly protein CtaG, found in Cereibacter sphaeroides (strain ATCC 17029 / ATH 2.4.9) (Rhodobacter sphaeroides).